A 356-amino-acid chain; its full sequence is tRNA-specific 2-thiouridylase MnmA (356 aa).

6–13 (AVSGGTDS) lines the ATP pocket. C95 serves as the catalytic Nucleophile. A disulfide bond links C95 and C195. G119 provides a ligand contact to ATP. The interaction with tRNA stretch occupies residues 145 to 147 (KDQ). Residue C195 is the Cysteine persulfide intermediate of the active site. The segment at 300–301 (RY) is interaction with tRNA.

It belongs to the MnmA/TRMU family.

It is found in the cytoplasm. The catalysed reaction is S-sulfanyl-L-cysteinyl-[protein] + uridine(34) in tRNA + AH2 + ATP = 2-thiouridine(34) in tRNA + L-cysteinyl-[protein] + A + AMP + diphosphate + H(+). In terms of biological role, catalyzes the 2-thiolation of uridine at the wobble position (U34) of tRNA, leading to the formation of s(2)U34. The chain is tRNA-specific 2-thiouridylase MnmA from Oleidesulfovibrio alaskensis (strain ATCC BAA-1058 / DSM 17464 / G20) (Desulfovibrio alaskensis).